The following is a 406-amino-acid chain: MFRVSLQATRRVAFRSARQIRFYSAHPPSGGVSHMNKPALLLAGFSTLGAIYVADGCPTLIERKPAPAEKPAEETPAAGQSQSISEPTKDADESPVSAQEEGAEPVTTPENEITYSEETHQALAATLSGDEPAAIEPVAESVNEQATEPAASGEATNEPVTGISEDTKAPSLSFDDSKTAKGVVLEDEADKKEIQQTSPDAVKTASKDGSEGESDVVLHEKSPAEAETITEAEEQAEIRSISGGTAEQSATAAAAAAGVQGEKKNEQQTAYNPETGEINWDCPCLGGMAYGPCGEEFKSAFSCFVYSEADPKGINCVEKFSTMQNCFRKYPDYYAEQIKDEEEASAEASKIEDKSTTPVSTATSTVEVQTENAVFEPVLEKYVEENPQLKDTPEAAAVTNTDDEKK.

The transit peptide at 1-23 (MFRVSLQATRRVAFRSARQIRFY) directs the protein to the mitochondrion. The Mitochondrial matrix portion of the chain corresponds to 24 to 37 (SAHPPSGGVSHMNK). Residues 38–54 (PALLLAGFSTLGAIYVA) traverse the membrane as a helical; Signal-anchor for type II membrane protein segment. Topologically, residues 55–406 (DGCPTLIERK…AVTNTDDEKK (352 aa)) are mitochondrial intermembrane. 2 disordered regions span residues 67-110 (PAEK…TTPE) and 142-276 (VNEQ…PETG). The span at 205–224 (ASKDGSEGESDVVLHEKSPA) shows a compositional bias: basic and acidic residues. Residues 242–260 (SGGTAEQSATAAAAAAGVQ) show a composition bias toward low complexity. 3 cysteine pairs are disulfide-bonded: Cys-282–Cys-284, Cys-293–Cys-326, and Cys-303–Cys-316. The CHCH domain maps to 290–334 (YGPCGEEFKSAFSCFVYSEADPKGINCVEKFSTMQNCFRKYPDYY). Short sequence motifs (cx9C motif) lie at residues 293 to 303 (CGEEFKSAFSC) and 316 to 326 (CVEKFSTMQNC). Disordered stretches follow at residues 341–365 (EEEA…ATST) and 384–406 (EENP…DEKK). The span at 356–365 (TTPVSTATST) shows a compositional bias: low complexity. The span at 384 to 393 (EENPQLKDTP) shows a compositional bias: basic and acidic residues.

In terms of assembly, monomer. It depends on Cu(2+) as a cofactor. Zn(2+) serves as cofactor.

It is found in the mitochondrion inner membrane. In terms of biological role, required for the import and folding of small cysteine-containing proteins (small Tim) in the mitochondrial intermembrane space (IMS). Forms a redox cycle with ERV1 that involves a disulfide relay system. Precursor proteins to be imported into the IMS are translocated in their reduced form into the mitochondria. The oxidized form of MIA40 forms a transient intermolecular disulfide bridge with the reduced precursor protein, resulting in oxidation of the precursor protein that now contains an intramolecular disulfide bond and is able to undergo folding in the IMS. In Kluyveromyces lactis (strain ATCC 8585 / CBS 2359 / DSM 70799 / NBRC 1267 / NRRL Y-1140 / WM37) (Yeast), this protein is Mitochondrial intermembrane space import and assembly protein 40 (MIA40).